Consider the following 274-residue polypeptide: Large ribosomal subunit protein uL2 (274 aa).

Residues 224-259 (AMNPVDHPHGGGEGRTSGGRHPVTPWGIPTKGYKTR) form a disordered region.

It belongs to the universal ribosomal protein uL2 family. In terms of assembly, part of the 50S ribosomal subunit. Forms a bridge to the 30S subunit in the 70S ribosome.

One of the primary rRNA binding proteins. Required for association of the 30S and 50S subunits to form the 70S ribosome, for tRNA binding and peptide bond formation. It has been suggested to have peptidyltransferase activity; this is somewhat controversial. Makes several contacts with the 16S rRNA in the 70S ribosome. In Citrifermentans bemidjiense (strain ATCC BAA-1014 / DSM 16622 / JCM 12645 / Bem) (Geobacter bemidjiensis), this protein is Large ribosomal subunit protein uL2.